The sequence spans 406 residues: Coenzyme A biosynthesis bifunctional protein CoaBC (406 aa).

Residues 1 to 191 (MLNNRNVLLC…ETSAPLEGKH (191 aa)) form a phosphopantothenoylcysteine decarboxylase region. Catalysis depends on cysteine 157, which acts as the Proton donor. The tract at residues 192–406 (VVITAGPTRE…ALSKQTGERS (215 aa)) is phosphopantothenate--cysteine ligase. The CTP site is built by aspartate 281, lysine 291, phenylalanine 325, lysine 339, and lysine 343.

This sequence in the N-terminal section; belongs to the HFCD (homo-oligomeric flavin containing Cys decarboxylase) superfamily. In the C-terminal section; belongs to the PPC synthetase family. Mg(2+) is required as a cofactor. The cofactor is FMN.

It carries out the reaction N-[(R)-4-phosphopantothenoyl]-L-cysteine + H(+) = (R)-4'-phosphopantetheine + CO2. The enzyme catalyses (R)-4'-phosphopantothenate + L-cysteine + CTP = N-[(R)-4-phosphopantothenoyl]-L-cysteine + CMP + diphosphate + H(+). It participates in cofactor biosynthesis; coenzyme A biosynthesis; CoA from (R)-pantothenate: step 2/5. It functions in the pathway cofactor biosynthesis; coenzyme A biosynthesis; CoA from (R)-pantothenate: step 3/5. In terms of biological role, catalyzes two sequential steps in the biosynthesis of coenzyme A. In the first step cysteine is conjugated to 4'-phosphopantothenate to form 4-phosphopantothenoylcysteine. In the second step the latter compound is decarboxylated to form 4'-phosphopantotheine. This is Coenzyme A biosynthesis bifunctional protein CoaBC from Bacillus subtilis (strain 168).